We begin with the raw amino-acid sequence, 349 residues long: SUMO-activating enzyme subunit 1 (349 aa).

N-acetylmethionine is present on methionine 1. At valine 2 the chain carries N-acetylvaline; in SUMO-activating enzyme subunit 1, N-terminally processed. Serine 15 is modified (phosphoserine). Lysine 201 carries the N6-acetyllysine modification.

The protein belongs to the ubiquitin-activating E1 family. In terms of assembly, heterodimer of SAE1 and UBA2/SAE2. The heterodimer corresponds to the two domains that are encoded on a single polypeptide chain in ubiquitin-activating enzyme E1. Interacts with UBE2I.

Its subcellular location is the nucleus. Its pathway is protein modification; protein sumoylation. The heterodimer acts as an E1 ligase for SUMO1, SUMO2, SUMO3, and probably SUMO4. It mediates ATP-dependent activation of SUMO proteins followed by formation of a thioester bond between a SUMO protein and a conserved active site cysteine residue on UBA2/SAE2. This chain is SUMO-activating enzyme subunit 1 (Sae1), found in Rattus norvegicus (Rat).